A 107-amino-acid polypeptide reads, in one-letter code: Sperm protamine P1 (107 aa).

2 stretches are compositionally biased toward basic and acidic residues: residues A1–F10 and R20–G33. The propeptide at A1 to G35 is removed in mature form. The tract at residues A1–K107 is disordered. A compositionally biased stretch (basic residues) spans H34 to K107. Position 42 is a phosphoserine (S42).

In terms of processing, a series of N-terminal cleavages yield the mature protein. Post-translationally, only the mature protein is phosphorylated. In terms of tissue distribution, gonads.

It is found in the nucleus. Its subcellular location is the chromosome. Its function is as follows. Protamines substitute for histones in the chromatin of sperm during the haploid phase of spermatogenesis. They compact sperm DNA into a highly condensed, stable and inactive complex. The sequence is that of Sperm protamine P1 from Bolinus brandaris (Purple dye murex).